The chain runs to 277 residues: Undecaprenyl-diphosphatase (277 aa).

The next 7 membrane-spanning stretches (helical) occupy residues 5–25 (WTAAQALILGVVEGLTEFLPI), 44–64 (RAMAFNIIIQLGAILAVVWEF), 86–106 (LNLLIAFMPAVVLGVIFADTI), 110–130 (LFNAITVATALVVGGVIMLWA), 184–204 (AATEFSFFLAMPTMVGAAVYS), 219–239 (VFAIGFITSFIFAMIAVRALL), and 255–275 (IAFGLLILATWQFGWIDWASA).

This sequence belongs to the UppP family.

Its subcellular location is the cell inner membrane. The catalysed reaction is di-trans,octa-cis-undecaprenyl diphosphate + H2O = di-trans,octa-cis-undecaprenyl phosphate + phosphate + H(+). Catalyzes the dephosphorylation of undecaprenyl diphosphate (UPP). Confers resistance to bacitracin. The protein is Undecaprenyl-diphosphatase of Pseudomonas savastanoi pv. phaseolicola (strain 1448A / Race 6) (Pseudomonas syringae pv. phaseolicola (strain 1448A / Race 6)).